We begin with the raw amino-acid sequence, 366 residues long: Tripartite motif-containing protein 54 (366 aa).

The RING-type zinc finger occupies 26–82 (CPICLEMFSKPVVILPCQHNLCRKCANDVFQASNPLWQSRSSTTVSSGGRFRCPSCR). The B box-type zinc finger occupies 121-163 (EQHLMCEEHEDEKINIYCLSCEVPTCSLCKVFGAHKDCEVAPL). Positions 126, 129, 149, and 155 each coordinate Zn(2+). A mediates microtubule-binding and homooligomerization region spans residues 168–211 (KRQKSELSDGIAMLVAGNDRVQAVITQMEEVCQTIEENSRRQKQ). Residues 185–258 (NDRVQAVITQ…LIRQYGDHLE (74 aa)) are a coiled coil. A COS domain is found at 271-329 (MEEPQMALYLQQAKELINKVGTMSKVELAGRPEPGYERMDQFTVSVEHVAEMLRTIDFQ). The segment at 326-366 (IDFQPGTSGEEEDEEVAVEGEEGNAGPEEERTDGRESTGQH) is disordered. Acidic residues predominate over residues 334-347 (GEEEDEEVAVEGEE). The segment covering 353–366 (EEERTDGRESTGQH) has biased composition (basic and acidic residues).

Homooligomer and heterooligomer. Interacts with TRIM63 and probably with TRIM55. Interacts with tubulin.

The protein localises to the cytoplasm. The protein resides in the cytoskeleton. It is found in the myofibril. It localises to the sarcomere. Its subcellular location is the z line. May bind and stabilize microtubules during myotubes formation. The protein is Tripartite motif-containing protein 54 (TRIM54) of Bos taurus (Bovine).